The following is a 265-amino-acid chain: Type III pantothenate kinase (265 aa).

6 to 13 serves as a coordination point for ATP; it reads DVGNTNIV. Substrate contacts are provided by residues Tyr100 and 107–110; that span reads GADR. The active-site Proton acceptor is the Asp109. Residue Asp129 coordinates K(+). Position 132 (Thr132) interacts with ATP. Thr184 provides a ligand contact to substrate.

It belongs to the type III pantothenate kinase family. Homodimer. The cofactor is NH4(+). K(+) serves as cofactor.

It localises to the cytoplasm. It carries out the reaction (R)-pantothenate + ATP = (R)-4'-phosphopantothenate + ADP + H(+). The protein operates within cofactor biosynthesis; coenzyme A biosynthesis; CoA from (R)-pantothenate: step 1/5. Catalyzes the phosphorylation of pantothenate (Pan), the first step in CoA biosynthesis. This Alkaliphilus oremlandii (strain OhILAs) (Clostridium oremlandii (strain OhILAs)) protein is Type III pantothenate kinase.